The sequence spans 406 residues: tRNA-specific 2-thiouridylase MnmA (406 aa).

ATP contacts are provided by residues 6-13 (AMSGGVDS) and Leu32. The active-site Nucleophile is the Cys101. A disulfide bridge links Cys101 with Cys193. Gly125 contributes to the ATP binding site. The interval 143–145 (KDQ) is interaction with tRNA. Cys193 acts as the Cysteine persulfide intermediate in catalysis. A disordered region spans residues 378 to 406 (GAPIEEQPAPGTVGAVDADAIEQGEDAQR). Residues 396–406 (DAIEQGEDAQR) show a composition bias toward acidic residues.

This sequence belongs to the MnmA/TRMU family.

It localises to the cytoplasm. The catalysed reaction is S-sulfanyl-L-cysteinyl-[protein] + uridine(34) in tRNA + AH2 + ATP = 2-thiouridine(34) in tRNA + L-cysteinyl-[protein] + A + AMP + diphosphate + H(+). Its function is as follows. Catalyzes the 2-thiolation of uridine at the wobble position (U34) of tRNA, leading to the formation of s(2)U34. The chain is tRNA-specific 2-thiouridylase MnmA from Corynebacterium urealyticum (strain ATCC 43042 / DSM 7109).